A 347-amino-acid chain; its full sequence is Phosphate acyltransferase (347 aa).

The protein belongs to the PlsX family. Homodimer. Probably interacts with PlsY.

It is found in the cytoplasm. It carries out the reaction a fatty acyl-[ACP] + phosphate = an acyl phosphate + holo-[ACP]. It participates in lipid metabolism; phospholipid metabolism. In terms of biological role, catalyzes the reversible formation of acyl-phosphate (acyl-PO(4)) from acyl-[acyl-carrier-protein] (acyl-ACP). This enzyme utilizes acyl-ACP as fatty acyl donor, but not acyl-CoA. This Sinorhizobium fredii (strain NBRC 101917 / NGR234) protein is Phosphate acyltransferase.